Consider the following 233-residue polypeptide: MKFDVLTLFPELFNTVMGESIIGRAQKNRLVEVNAVNIRDYSKDKHKKVDDYPFGGGNGMVMMCQPVIDAYKAISEGMEQKPKVIYMSPQGKVLTQEMAKELSKQEHLILLCGHYEGIDERIIEEIIDEEISIGDYVLTGGELPAMVLIDCVSRLIPGVLSTEGSFSDESHFNGLLEYPQYTRPADYNGNKVPEVLLSGHHANIEKWRMQQSLDRTRDKRPDLFNKLPNKNLL.

S-adenosyl-L-methionine is bound by residues Gly-113 and Ile-133–Leu-138.

It belongs to the RNA methyltransferase TrmD family. Homodimer.

The protein resides in the cytoplasm. The catalysed reaction is guanosine(37) in tRNA + S-adenosyl-L-methionine = N(1)-methylguanosine(37) in tRNA + S-adenosyl-L-homocysteine + H(+). Specifically methylates guanosine-37 in various tRNAs. The protein is tRNA (guanine-N(1)-)-methyltransferase of Ruminiclostridium cellulolyticum (strain ATCC 35319 / DSM 5812 / JCM 6584 / H10) (Clostridium cellulolyticum).